We begin with the raw amino-acid sequence, 247 residues long: 1-(5-phosphoribosyl)-5-[(5-phosphoribosylamino)methylideneamino] imidazole-4-carboxamide isomerase (247 aa).

The active-site Proton acceptor is aspartate 16. The active-site Proton donor is aspartate 135.

Belongs to the HisA/HisF family.

It is found in the cytoplasm. The enzyme catalyses 1-(5-phospho-beta-D-ribosyl)-5-[(5-phospho-beta-D-ribosylamino)methylideneamino]imidazole-4-carboxamide = 5-[(5-phospho-1-deoxy-D-ribulos-1-ylimino)methylamino]-1-(5-phospho-beta-D-ribosyl)imidazole-4-carboxamide. It participates in amino-acid biosynthesis; L-histidine biosynthesis; L-histidine from 5-phospho-alpha-D-ribose 1-diphosphate: step 4/9. The polypeptide is 1-(5-phosphoribosyl)-5-[(5-phosphoribosylamino)methylideneamino] imidazole-4-carboxamide isomerase (Paenarthrobacter aurescens (strain TC1)).